The following is a 282-amino-acid chain: Epoxide hydrolase LasB (282 aa).

The segment at Met1–Ala133 is lsd19A. Tyr14 lines the substrate pocket. The Proton acceptor; for 5-exo epoxide-opening cyclization activity role is filled by Asp38. Glu65 and His146 together coordinate substrate. Positions Pro134 to Ala282 are lsd19B. Asp170 functions as the Proton acceptor; for 6-endo epoxide-opening cyclization activity in the catalytic mechanism. Positions 177, 197, and 251 each coordinate substrate.

Epoxide hydrolase responsible for the double epoxide-opening cyclization of bisepoxyprelasalocid A to form lasalocid A, a polyether antibiotic. In vitro, accepts various substrate analogs differing in the left segment of lasalocid and epoxide stereochemistry to afford products with excellent regioselectivity. The sequence is that of Epoxide hydrolase LasB (lsd19) from Streptomyces lasalocidi (Streptomyces lasaliensis).